Here is a 71-residue protein sequence, read N- to C-terminus: Small, acid-soluble spore protein 2 (71 aa).

This sequence belongs to the alpha/beta-type SASP family.

SASP are bound to spore DNA. They are double-stranded DNA-binding proteins that cause DNA to change to an a-like conformation. They protect the DNA backbone from chemical and enzymatic cleavage and are thus involved in dormant spore's high resistance to UV light. This chain is Small, acid-soluble spore protein 2, found in Bacillus subtilis.